The sequence spans 149 residues: Alpha-crystallin A chain (149 aa).

Residues 41–149 (LFRSVLESGI…DPTHSERPIP (109 aa)) enclose the sHSP domain. Histidine 89, glutamate 91, histidine 96, and histidine 143 together coordinate Zn(2+).

It belongs to the small heat shock protein (HSP20) family. As to quaternary structure, heteropolymer composed of three CRYAA and one CRYAB subunits. Inter-subunit bridging via zinc ions enhances stability, which is crucial as there is no protein turn over in the lens. Can also form homodimers and homotetramers (dimers of dimers) which serve as the building blocks of homooligomers. Within homooligomers, the zinc-binding motif is created from residues of 3 different molecules. His-89 and Glu-91 from one molecule are ligands of the zinc ion, and His-96 and His-143 residues from additional molecules complete the site with tetrahedral coordination geometry.

Its subcellular location is the cytoplasm. The protein resides in the nucleus. Its function is as follows. Contributes to the transparency and refractive index of the lens. May act as a chaperone, preventing aggregation of various proteins under a wide range of stress conditions. This chain is Alpha-crystallin A chain (CRYAA), found in Anas platyrhynchos (Mallard).